We begin with the raw amino-acid sequence, 152 residues long: FMN reductase (NADH) RutF (152 aa).

It belongs to the non-flavoprotein flavin reductase family. RutF subfamily.

It catalyses the reaction FMNH2 + NAD(+) = FMN + NADH + 2 H(+). Catalyzes the reduction of FMN to FMNH2 which is used to reduce pyrimidine by RutA via the Rut pathway. This is FMN reductase (NADH) RutF from Shigella sonnei (strain Ss046).